We begin with the raw amino-acid sequence, 473 residues long: Photosystem II CP43 reaction center protein (473 aa).

Positions 1-14 (MKILYSLRRFYHVE) are excised as a propeptide. Thr-15 carries the N-acetylthreonine modification. Phosphothreonine is present on Thr-15. Transmembrane regions (helical) follow at residues 69 to 93 (LFEV…PHLA), 134 to 155 (LLGP…KDRN), 178 to 200 (KALY…RKIT), 255 to 275 (KPFA…LSYS), and 291 to 312 (WFNN…ASQA). A [CaMn4O5] cluster-binding site is contributed by Glu-367. The helical transmembrane segment at 447–471 (RARAAAAGFEKGIDRDLEPVLYMTP) threads the bilayer.

Belongs to the PsbB/PsbC family. PsbC subfamily. In terms of assembly, PSII is composed of 1 copy each of membrane proteins PsbA, PsbB, PsbC, PsbD, PsbE, PsbF, PsbH, PsbI, PsbJ, PsbK, PsbL, PsbM, PsbT, PsbX, PsbY, PsbZ, Psb30/Ycf12, at least 3 peripheral proteins of the oxygen-evolving complex and a large number of cofactors. It forms dimeric complexes. Binds multiple chlorophylls and provides some of the ligands for the Ca-4Mn-5O cluster of the oxygen-evolving complex. It may also provide a ligand for a Cl- that is required for oxygen evolution. PSII binds additional chlorophylls, carotenoids and specific lipids. serves as cofactor.

The protein resides in the plastid. The protein localises to the chloroplast thylakoid membrane. In terms of biological role, one of the components of the core complex of photosystem II (PSII). It binds chlorophyll and helps catalyze the primary light-induced photochemical processes of PSII. PSII is a light-driven water:plastoquinone oxidoreductase, using light energy to abstract electrons from H(2)O, generating O(2) and a proton gradient subsequently used for ATP formation. The polypeptide is Photosystem II CP43 reaction center protein (Sorghum bicolor (Sorghum)).